Reading from the N-terminus, the 401-residue chain is Bone morphogenetic protein 4 (401 aa).

The N-terminal stretch at Met-1 to Gly-19 is a signal peptide. Positions Gly-20–Arg-287 are excised as a propeptide. 3 N-linked (GlcNAc...) asparagine glycosylation sites follow: Asn-141, Asn-204, and Asn-238. The interval His-279–Lys-299 is disordered. The segment covering Ala-280–Lys-299 has biased composition (basic residues). Cystine bridges form between Cys-301–Cys-366, Cys-330–Cys-398, and Cys-334–Cys-400. N-linked (GlcNAc...) asparagine glycosylation is found at Asn-343 and Asn-358.

Belongs to the TGF-beta family. As to quaternary structure, homodimer; disulfide-linked. Forms heterodimers with the TGF-beta family member derriere. Part of a complex consisting of twsg1 and chrd. Interacts with tsku.

It is found in the secreted. The protein resides in the extracellular space. It localises to the extracellular matrix. Its function is as follows. Posterior-ventralizing factor in Xenopus mesoderm induction. Induces posteroventral mesoderm and counteracts dorsalizing signals such as activin. The sequence is that of Bone morphogenetic protein 4 (bmp4) from Xenopus laevis (African clawed frog).